The following is a 152-amino-acid chain: Methylglyoxal synthase (152 aa).

Residues 6–152 (RTMATAKNIA…YQHYLNGRLK (147 aa)) enclose the MGS-like domain. Residues histidine 19, lysine 23, 45-48 (TGTT), and 65-66 (SG) contribute to the substrate site. The active-site Proton donor/acceptor is aspartate 71. Histidine 98 contacts substrate.

Belongs to the methylglyoxal synthase family.

The catalysed reaction is dihydroxyacetone phosphate = methylglyoxal + phosphate. Catalyzes the formation of methylglyoxal from dihydroxyacetone phosphate. This Photorhabdus laumondii subsp. laumondii (strain DSM 15139 / CIP 105565 / TT01) (Photorhabdus luminescens subsp. laumondii) protein is Methylglyoxal synthase.